The sequence spans 94 residues: ESAT-6-like protein EsxL (94 aa).

It belongs to the WXG100 family. ESAT-6 subfamily. As to quaternary structure, strongly interacts with EsxK to form a heterodimeric complex under reducing conditions.

Its subcellular location is the secreted. The sequence is that of ESAT-6-like protein EsxL from Mycobacterium tuberculosis (strain CDC 1551 / Oshkosh).